A 98-amino-acid polypeptide reads, in one-letter code: UPF0235 protein azo3464 (98 aa).

The protein belongs to the UPF0235 family.

The sequence is that of UPF0235 protein azo3464 from Azoarcus sp. (strain BH72).